The primary structure comprises 781 residues: Homeobox protein SIX4 (781 aa).

Residues 1-10 (MSSSSPTGQI) are compositionally biased toward polar residues. Disordered regions lie at residues 1 to 55 (MSSS…PLEP) and 270 to 321 (WFKN…GITN). At Ser2 the chain carries N-acetylserine. Positions 223–282 (GEETVYCFKEKSRNALKELYKQNRYPSPAEKRHLAKITGLSLTQVSNWFKNRRQRDRNPS) form a DNA-binding region, homeobox. Composition is skewed to basic and acidic residues over residues 278-290 (DRNP…KSES) and 299-308 (ESSKGHEDLS). Ser640 bears the Phosphoserine mark.

It belongs to the SIX/Sine oculis homeobox family. In terms of assembly, interacts with EYA3; acts cooperatively with EYA3 to transactivate target genes through interaction and nuclear translocation of EYA3 protein.

The protein localises to the nucleus. The protein resides in the cytoplasm. In terms of biological role, transcriptional regulator which can act as both a transcriptional repressor and activator by binding a DNA sequence on these target genes and is involved in processes like cell differentiation, cell migration and cell survival. Transactivates gene expression by binding a 5'-[CAT]A[CT][CT][CTG]GA[GAT]-3' motif present in the Trex site and a 5'-TCA[AG][AG]TTNC-3' motif present in the MEF3 site of the muscle-specific genes enhancer. Acts cooperatively with EYA proteins to transactivate their target genes through interaction and nuclear translocation of EYA protein. Acts synergistically with SIX1 to regulate target genes involved in formation of various organs, including muscle, kidney, gonad, ganglia, olfactory epithelium and cranial skeleton. Plays a role in several important steps of muscle development. Controls the genesis of hypaxial myogenic progenitors in the dermomyotome by transactivating PAX3 and the delamination and migration of the hypaxial precursors from the ventral lip to the limb buds through the transactivation of PAX3, MET and LBX1. Controls myoblast determination by transactivating MYF5, MYOD1 and MYF6. Controls somitic differentiation in myocyte through MYOG transactivation. Plays a role in synaptogenesis and sarcomere organization by participating in myofiber specialization during embryogenesis by activating fast muscle program in the primary myotome resulting in an up-regulation of fast muscle genes, including ATP2A1, MYL1 and TNNT3. Simultaneously, is also able to activate inhibitors of slow muscle genes, such as SOX6, HRASLS, and HDAC4, thereby restricting the activation of the slow muscle genes. During muscle regeneration, negatively regulates differentiation of muscle satellite cells through down-regulation of MYOG expression. During kidney development regulates the early stages of metanephros development and ureteric bud formation through regulation of GDNF, SALL1, PAX8 and PAX2 expression. Plays a role in gonad development by regulating both testis determination and size determination. In gonadal sex determination, transactivates ZFPM2 by binding a MEF3 consensus sequence, resulting in SRY up-regulation. In gonadal size determination, transactivates NR5A1 by binding a MEF3 consensus sequence resulting in gonadal precursor cell formation regulation. During olfactory development mediates the specification and patterning of olfactory placode through fibroblast growth factor and BMP4 signaling pathways and also regulates epithelial cell proliferation during placode formation. Promotes survival of sensory neurons during early trigeminal gangliogenesis. In the developing dorsal root ganglia, up-regulates SLC12A2 transcription. Regulates early thymus/parathyroid organogenesis through regulation of GCM2 and FOXN1 expression. Forms gustatory papillae during development of the tongue. Also plays a role during embryonic cranial skeleton morphogenesis. The chain is Homeobox protein SIX4 (SIX4) from Homo sapiens (Human).